The chain runs to 491 residues: Cell division control protein 1 (491 aa).

Residues 1-33 form a disordered region; that stretch reads MVYRNRSKSVLSTHSKKSDDKAHYKSRSKKKSK. Over 1–39 the chain is Cytoplasmic; the sequence is MVYRNRSKSVLSTHSKKSDDKAHYKSRSKKKSKSRSKKR. Basic residues predominate over residues 24 to 33; sequence YKSRSKKKSK. The helical transmembrane segment at 40–60 threads the bilayer; it reads LRIYWRYISIVWILWLGLISY. At 61 to 391 the chain is on the extracellular side; sequence YESVVVKRAM…LCYMPDPYKA (331 aa). The a divalent metal cation site is built by aspartate 95, aspartate 144, asparagine 183, and histidine 323. The chain crosses the membrane as a helical span at residues 392 to 412; sequence IRMYLWGLLFSAAFIAYMHFF. At 413–465 the chain is on the cytoplasmic side; the sequence is PKSFNNRVATIMNRVFTRPDGNTSDLPLPTSISKSKSKKSLTHSKYAVNDTRS. Residues 466–486 form a helical membrane-spanning segment; it reads IKQFLVNAIVLFVSVMPIFIY. Topologically, residues 487-491 are extracellular; it reads FYTVV.

Belongs to the metallophosphoesterase superfamily. MPPE1 family. A divalent metal cation serves as cofactor.

The protein localises to the membrane. Its function is as follows. Probable metallophosphoesterase which may participate in recombinational repair of double -strand breaks. This chain is Cell division control protein 1 (CDC1), found in Saccharomyces cerevisiae (strain ATCC 204508 / S288c) (Baker's yeast).